A 70-amino-acid polypeptide reads, in one-letter code: U2-agatoxin-Ao1r (70 aa).

The first 20 residues, 1-20 (MRSIISLILISAMVFSMIAP), serve as a signal peptide directing secretion. Positions 21 to 34 (VPEEERLQLSEDER) are excised as a propeptide. 3 disulfide bridges follow: Cys-37-Cys-53, Cys-44-Cys-58, and Cys-52-Cys-68. Leu-69 carries the post-translational modification Leucine amide.

It belongs to the neurotoxin 01 (U2-agtx) family. As to expression, expressed by the venom gland.

The protein localises to the secreted. In terms of biological role, insect active toxin causing rapid but reversible paralysis in crickets. No activity shown in mammals. Does not show effect on mammalian voltage-gated calcium channels. This is U2-agatoxin-Ao1r from Agelena orientalis (Funnel-web spider).